We begin with the raw amino-acid sequence, 132 residues long: MVMTDPIADFLTRIRNANMVYHDKVEVPASKVKRAIAEIFKNEGYVKDVEYVEDNKQGLLRIYLKFGPNREKVITGVKRISKPGLRVYARKEEIPKVLGGLGVAVLSTSQGIMSDKAARKAGLGGEVLCYIW.

It belongs to the universal ribosomal protein uS8 family. Part of the 30S ribosomal subunit. Contacts proteins S5 and S12.

In terms of biological role, one of the primary rRNA binding proteins, it binds directly to 16S rRNA central domain where it helps coordinate assembly of the platform of the 30S subunit. In Heliobacterium modesticaldum (strain ATCC 51547 / Ice1), this protein is Small ribosomal subunit protein uS8.